The following is a 110-amino-acid chain: Putative UPF0377 protein YKL223W (110 aa).

This sequence belongs to the UPF0377 family.

This Saccharomyces cerevisiae (strain ATCC 204508 / S288c) (Baker's yeast) protein is Putative UPF0377 protein YKL223W.